The following is a 348-amino-acid chain: Rhodopsin (348 aa).

The residue at position 1 (M1) is an N-acetylmethionine. Residues 1 to 36 are Extracellular-facing; it reads MNGTEGPNFYVPFSNKTGVVRSPFEFPQYYLAEPWQ. 2 N-linked (GlcNAc...) asparagine glycosylation sites follow: N2 and N15. Residues 37 to 61 traverse the membrane as a helical segment; that stretch reads FSMLAAYMFLLIVLGFPINFLTLYV. The Cytoplasmic portion of the chain corresponds to 62–73; sequence TVQHKKLRTPLN. The helical transmembrane segment at 74-96 threads the bilayer; sequence YILLNLAVADLFMVFGGFTTTLY. At 97-110 the chain is on the extracellular side; sequence TSLHGYFVFGPTGC. C110 and C187 are oxidised to a cystine. A helical transmembrane segment spans residues 111 to 133; it reads NLEGFFATLGGEIALWSLVVLAI. The short motif at 134-136 is the 'Ionic lock' involved in activated form stabilization element; sequence ERY. Topologically, residues 134 to 152 are cytoplasmic; the sequence is ERYVVVCKPMSNFRFGENH. A helical membrane pass occupies residues 153–173; sequence AIMGVGFTWVMALACAAPPLV. At 174 to 202 the chain is on the extracellular side; sequence GWSRYIPEGMQCSCGIDYYTLKPEVNNES. E201 provides a ligand contact to Zn(2+). Residues 203-224 traverse the membrane as a helical segment; the sequence is FVIYMFVVHFTIPMIVIFFCYG. Residues 225-252 are Cytoplasmic-facing; that stretch reads QLVFTVKEAAAQQQESATTQKAEKEVTR. Residues 253–274 traverse the membrane as a helical segment; sequence MVIIMVIAFLICWVPYASVAFY. Over 275 to 286 the chain is Extracellular; the sequence is IFTHQGSNFGPI. Q279 provides a ligand contact to Zn(2+). The helical transmembrane segment at 287-308 threads the bilayer; that stretch reads FMTLPAFFAKAASIYNPVIYIM. K296 is modified (N6-(retinylidene)lysine). The Cytoplasmic portion of the chain corresponds to 309-348; it reads MNKQFRTCMITTLCCGKNPLGDDEVSASASKTETSQVAPA. S-palmitoyl cysteine attachment occurs at residues C322 and C323. Residues 330-348 form an interaction with SAG region; it reads DDEVSASASKTETSQVAPA. A phosphoserine mark is found at S334 and S338. A phosphothreonine mark is found at T340 and T342. Position 343 is a phosphoserine (S343).

Belongs to the G-protein coupled receptor 1 family. Opsin subfamily. In terms of assembly, homodimer. May form a complex composed of RHO, GRK1 and RCVRN in a Ca(2+)-dependent manner; RCVRN prevents the interaction between GRK1 and RHO. Interacts with GRK1. Interacts (phosphorylated form) with SAG. Interacts with GNAT1. Interacts with GNAT3. SAG and G-proteins compete for a common binding site. Interacts with PRCD; the interaction promotes PRCD stability. Forms a complex with ASAP1 and ARF4. Forms a complex with ASAP1, RAB11A, Rabin8/RAB3IP, ARF4 and RAB11FIP3; the complex regulates Golgi-to-cilia rhodopsin/RHO transport in photoreceptors. In terms of processing, phosphorylated on some or all of the serine and threonine residues present in the C-terminal region. Post-translationally, contains one covalently linked retinal chromophore. Upon light absorption, the covalently bound 11-cis-retinal is converted to all-trans-retinal. After hydrolysis of the Schiff base and release of the covalently bound all-trans-retinal, active rhodopsin is regenerated by binding of a fresh molecule of 11-cis-retinal.

The protein localises to the membrane. It is found in the cell projection. Its subcellular location is the cilium. The protein resides in the photoreceptor outer segment. Functionally, photoreceptor required for image-forming vision at low light intensity. Required for photoreceptor cell viability after birth. Light-induced isomerization of 11-cis to all-trans retinal triggers a conformational change that activates signaling via G-proteins. Subsequent receptor phosphorylation mediates displacement of the bound G-protein alpha subunit by the arrestin SAG and terminates signaling. The chain is Rhodopsin (RHO) from Phoca vitulina (Harbor seal).